A 543-amino-acid chain; its full sequence is CTP synthase (543 aa).

The amidoligase domain stretch occupies residues 1-265; sequence MTRYIFVTGG…DDFVVERFGL (265 aa). Residue S13 participates in CTP binding. Residue S13 participates in UTP binding. Residues 14–19 and D71 contribute to the ATP site; that span reads SLGKGI. Residues D71 and E139 each contribute to the Mg(2+) site. CTP-binding positions include 146–148, 186–191, and K222; these read DIE and KTKPTQ. Residues 186–191 and K222 each bind UTP; that span reads KTKPTQ. The Glutamine amidotransferase type-1 domain maps to 290–541; it reads TIAMVGKYME…VNAALAQKAK (252 aa). G351 serves as a coordination point for L-glutamine. C378 (nucleophile; for glutamine hydrolysis) is an active-site residue. L-glutamine contacts are provided by residues 379–382, E402, and R469; that span reads LGMQ. Active-site residues include H514 and E516.

It belongs to the CTP synthase family. As to quaternary structure, homotetramer.

The catalysed reaction is UTP + L-glutamine + ATP + H2O = CTP + L-glutamate + ADP + phosphate + 2 H(+). It catalyses the reaction L-glutamine + H2O = L-glutamate + NH4(+). It carries out the reaction UTP + NH4(+) + ATP = CTP + ADP + phosphate + 2 H(+). Its pathway is pyrimidine metabolism; CTP biosynthesis via de novo pathway; CTP from UDP: step 2/2. With respect to regulation, allosterically activated by GTP, when glutamine is the substrate; GTP has no effect on the reaction when ammonia is the substrate. The allosteric effector GTP functions by stabilizing the protein conformation that binds the tetrahedral intermediate(s) formed during glutamine hydrolysis. Inhibited by the product CTP, via allosteric rather than competitive inhibition. Catalyzes the ATP-dependent amination of UTP to CTP with either L-glutamine or ammonia as the source of nitrogen. Regulates intracellular CTP levels through interactions with the four ribonucleotide triphosphates. This is CTP synthase from Ectopseudomonas mendocina (strain ymp) (Pseudomonas mendocina).